The chain runs to 215 residues: 3-isopropylmalate dehydratase small subunit (215 aa).

This sequence belongs to the LeuD family. LeuD type 1 subfamily. As to quaternary structure, heterodimer of LeuC and LeuD.

It carries out the reaction (2R,3S)-3-isopropylmalate = (2S)-2-isopropylmalate. The protein operates within amino-acid biosynthesis; L-leucine biosynthesis; L-leucine from 3-methyl-2-oxobutanoate: step 2/4. Its function is as follows. Catalyzes the isomerization between 2-isopropylmalate and 3-isopropylmalate, via the formation of 2-isopropylmaleate. The polypeptide is 3-isopropylmalate dehydratase small subunit (Xanthomonas axonopodis pv. citri (strain 306)).